The primary structure comprises 474 residues: MRKQLPKDFVIGGATAAYQVEGATKEDGKGRVLWDDFLEKQGRFSPDPAADFYHRYDEDLALAEAYGHQVIRLSIAWSRIFPDGAGAVEPRGVAFYHRLFAACAKHHLIPFVTLHHFDTPERLHAIGDWLSQEMLEDFVEYARFCFEEFPEIKHWITINEPTSMAVQQYTSGTFPPAETGHFDKTFQAEHNQIVAHARIVNLYKSMGLDGEIGIVHALQTPYPYSDSSEDQHAADLQDALENRLYLDGTLAGDYAPKTLALIKEILAANQQPMFKYTDEEMAAIKKAAHQLDFVGVNNYFSKWLRAYHGKSETIHNGDGSKGSSVARLHGIGEEKKPAGIETTDWDWSIYPRGMYDMLMRIHQDYPLVPAIYVTENGIGLKESLPAEVTPNTVIADPKRIDYLKKYLSAVADAIQAGANVKGYFVWSLQDQFSWTNGYSKRYGLFFVDFPTQKRYVKQSAEWLKQVSQTHVIPE.

5 residues coordinate D-galactose 6-phosphate: glutamine 19, histidine 116, asparagine 159, glutamate 160, and asparagine 297. The active-site Proton donor is glutamate 160. The active-site Nucleophile is glutamate 375. Residues serine 433, tryptophan 434, lysine 440, and tyrosine 442 each coordinate D-galactose 6-phosphate.

The protein belongs to the glycosyl hydrolase 1 family.

The enzyme catalyses a 6-phospho-beta-D-galactoside + H2O = D-galactose 6-phosphate + an alcohol. Its pathway is carbohydrate metabolism; lactose degradation; D-galactose 6-phosphate and beta-D-glucose from lactose 6-phosphate: step 1/1. This is 6-phospho-beta-galactosidase from Lacticaseibacillus rhamnosus (Lactobacillus rhamnosus).